Reading from the N-terminus, the 548-residue chain is Probable malate:quinone oxidoreductase (548 aa).

The segment at 522–548 is disordered; the sequence is KPQAADSTPKPQLKPKPVQKEVADIAL. The segment covering 539 to 548 has biased composition (basic and acidic residues); that stretch reads VQKEVADIAL.

Belongs to the MQO family. FAD serves as cofactor.

The catalysed reaction is (S)-malate + a quinone = a quinol + oxaloacetate. The protein operates within carbohydrate metabolism; tricarboxylic acid cycle; oxaloacetate from (S)-malate (quinone route): step 1/1. The sequence is that of Probable malate:quinone oxidoreductase from Escherichia coli O9:H4 (strain HS).